A 513-amino-acid chain; its full sequence is Glutamyl-tRNA(Gln) amidotransferase subunit A (513 aa).

Active-site charge relay system residues include lysine 85 and serine 160. Serine 184 functions as the Acyl-ester intermediate in the catalytic mechanism.

This sequence belongs to the amidase family. GatA subfamily. In terms of assembly, heterotrimer of A, B and C subunits.

It catalyses the reaction L-glutamyl-tRNA(Gln) + L-glutamine + ATP + H2O = L-glutaminyl-tRNA(Gln) + L-glutamate + ADP + phosphate + H(+). In terms of biological role, allows the formation of correctly charged Gln-tRNA(Gln) through the transamidation of misacylated Glu-tRNA(Gln) in organisms which lack glutaminyl-tRNA synthetase. The reaction takes place in the presence of glutamine and ATP through an activated gamma-phospho-Glu-tRNA(Gln). This Bifidobacterium longum subsp. infantis (strain ATCC 15697 / DSM 20088 / JCM 1222 / NCTC 11817 / S12) protein is Glutamyl-tRNA(Gln) amidotransferase subunit A.